We begin with the raw amino-acid sequence, 342 residues long: Olfactory receptor 51F2 (342 aa).

The Extracellular segment spans residues 1–39 (MTETSLSSQCFPMSVLNNTIAEPLIFLLMGIPGLKATQY). N17 carries an N-linked (GlcNAc...) asparagine glycan. The helical transmembrane segment at 40–60 (WISIPFCLLYVVAVSGNSMIL) threads the bilayer. At 61–68 (FVVLCERS) the chain is on the cytoplasmic side. A helical membrane pass occupies residues 69–89 (LHKPMYYFLSMLSATDLSLSL). The Extracellular portion of the chain corresponds to 90 to 113 (CTLSTTLGVFWFEAREINLNACIA). A disulfide bond links C111 and C203. A helical membrane pass occupies residues 114 to 134 (QMFFLHGFTFMESGVLLAMAF). The Cytoplasmic portion of the chain corresponds to 135-153 (DRFVAICYPLRYTTILTNA). The chain crosses the membrane as a helical span at residues 154 to 174 (RIAKIGMSMLIRNVAVMLPVM). Residues 175-210 (LFVKRLSFCSSMVLSHSYCYHVDLIQLSCTDNRINS) are Extracellular-facing. Residues 211-231 (ILGLFALLSTTGFDCPCILLS) form a helical membrane-spanning segment. At 232-251 (YILIIRSVLSIASSEERRKA) the chain is on the cytoplasmic side. The chain crosses the membrane as a helical span at residues 252-272 (FNTCTSHISAVSIFYLPLISL). Residues 273 to 287 (SLVHRYGHSAPPFVH) are Extracellular-facing. The chain crosses the membrane as a helical span at residues 288-308 (IIMANVFLLIPPVLNPIIYSV). The Cytoplasmic portion of the chain corresponds to 309-342 (KIKQIQKAIIKVLIQKHSKSNHQLFLIRDKAIYE).

This sequence belongs to the G-protein coupled receptor 1 family.

Its subcellular location is the cell membrane. In terms of biological role, odorant receptor. The protein is Olfactory receptor 51F2 (OR51F2) of Homo sapiens (Human).